A 270-amino-acid chain; its full sequence is 25S rRNA adenine-N(1) methyltransferase (270 aa).

2 residues coordinate S-adenosyl-L-methionine: Gly111 and Asp131.

It belongs to the BMT2 family.

It localises to the nucleus. The protein resides in the nucleolus. Functionally, S-adenosyl-L-methionine-dependent methyltransferase that specifically methylates the N(1) position of an adenine present in helix 65 in 25S rRNA. The polypeptide is 25S rRNA adenine-N(1) methyltransferase (Schizosaccharomyces pombe (strain 972 / ATCC 24843) (Fission yeast)).